We begin with the raw amino-acid sequence, 130 residues long: Small ribosomal subunit protein uS11 (130 aa).

The protein belongs to the universal ribosomal protein uS11 family. As to quaternary structure, part of the 30S ribosomal subunit. Interacts with proteins S7 and S18. Binds to IF-3.

Functionally, located on the platform of the 30S subunit, it bridges several disparate RNA helices of the 16S rRNA. Forms part of the Shine-Dalgarno cleft in the 70S ribosome. In Sulfurimonas denitrificans (strain ATCC 33889 / DSM 1251) (Thiomicrospira denitrificans (strain ATCC 33889 / DSM 1251)), this protein is Small ribosomal subunit protein uS11.